The chain runs to 313 residues: Short-chain dehydrogenase/reductase family 9C member 7 (313 aa).

29–53 lines the NADP(+) pocket; sequence FITGCDSGFGNLLAKQLVDRGMKVL. A substrate-binding site is contributed by serine 160. Tyrosine 172 (proton acceptor) is an active-site residue. The residue at position 185 (serine 185) is a Phosphoserine.

The protein belongs to the short-chain dehydrogenases/reductases (SDR) family. Highly expressed in liver.

Its subcellular location is the cytoplasm. The catalysed reaction is a N-[omega-(9R,10R)-epoxy-(13R)-hydroxy-(11E)-octadecenoyloxy]acyl-beta-D-glucosyl-(1&lt;-&gt;1)-sphing-4E-enine + NAD(+) = a N-[omega-(9R,10R)-epoxy-13-oxo-(11E)-octadecenoyloxy]acyl-beta-D-glucosyl-(1&lt;-&gt;1)-sphing-4E-enine + NADH + H(+). It catalyses the reaction a N-[omega-(9R,10R)-epoxy-(13R)-hydroxy-(11E)-octadecenoyloxy]-acylsphing-4E-enine + NAD(+) = a N-[omega-(9R,10R)-epoxy-13-oxo-(11E)-octadecenoyloxy]-acylsphing-4E-enine + NADH + H(+). Functionally, plays a crucial role in the formation of the epidermal permeability barrier. Catalyzes the NAD+-dependent dehydrogenation of the linoleate 9,10-trans-epoxy-11E-13-alcohol esterified in omega-O-acylceramides (such as in N-[omega-(9R,10R)-epoxy-(13R)-hydroxy-(11E)-octadecenoyloxy]-acylsphing-4E-enine) to the corresponding 13-ketone, the reactive moiety required for binding of epidermal ceramides to proteins. Displays weak conversion of all-trans-retinal to all-trans-retinol in the presence of NADH. Has apparently no steroid dehydrogenase activity. This is Short-chain dehydrogenase/reductase family 9C member 7 (Sdr9c7) from Mus musculus (Mouse).